The following is a 60-amino-acid chain: uncharacterized protein (60 aa).

This is an uncharacterized protein from Escherichia coli O157:H7.